Reading from the N-terminus, the 86-residue chain is Small ribosomal subunit protein bS20 (86 aa).

This sequence belongs to the bacterial ribosomal protein bS20 family.

Its function is as follows. Binds directly to 16S ribosomal RNA. This Pseudarthrobacter chlorophenolicus (strain ATCC 700700 / DSM 12829 / CIP 107037 / JCM 12360 / KCTC 9906 / NCIMB 13794 / A6) (Arthrobacter chlorophenolicus) protein is Small ribosomal subunit protein bS20.